The following is a 476-amino-acid chain: MMHLAFLVLLCLPVCSAYPLSGAAKEEDSNKDLAQQYLEKYYNLEKDVKQFRRKDSNLIVKKIQGMQKFLGLEVTGKLDTDTLEVMRKPRCGVPDVGHFSSFPGMPKWRKTHLTYRIVNYTPDLPRDAVDSAIEKALKVWEEVTPLTFSRLYEGEADIMISFAVKEHGDFYSFDGPGHSLAHAYPPGPGLYGDIHFDDDEKWTEDASGTNLFLVAAHELGHSLGLFHSANTEALMYPLYNSFTELAQFRLSQDDVNGIQSLYGPPPASTEEPLVPTKSVPSGSEMPAKCDPALSFDAISTLRGEYLFFKDRYFWRRSHWNPEPEFHLISAFWPSLPSYLDAAYEVNSRDTVFIFKGNEFWAIRGNEVQAGYPRGIHTLGFPPTIRKIDAAVSDKEKKKTYFFAADKYWRFDENSQSMEQGFPRLIADDFPGVEPKVDAVLQAFGFFYFFSGSSQFEFDPNARMVTHILKSNSWLHC.

Residues 1 to 17 form the signal peptide; the sequence is MMHLAFLVLLCLPVCSA. The propeptide at 18 to 98 is activation peptide; the sequence is YPLSGAAKEE…PRCGVPDVGH (81 aa). The Cysteine switch signature appears at 89–96; that stretch reads PRCGVPDV. Zn(2+) contacts are provided by C91, H167, D169, H182, H195, and H217. Residue E218 is part of the active site. The Zn(2+) site is built by H221 and H227. Hemopexin repeat units lie at residues 286 to 335, 336 to 382, 384 to 432, and 433 to 476; these read PAKC…WPSL, PSYL…GFPP, IRKI…FPGV, and EPKV…WLHC. C289 and C476 are oxidised to a cystine.

The protein belongs to the peptidase M10A family. Zn(2+) serves as cofactor. The cofactor is Ca(2+).

It is found in the secreted. It localises to the extracellular space. The protein resides in the extracellular matrix. The catalysed reaction is Similar to stromelysin 1, but action on collagen types III, IV and V is weak.. Functionally, can degrade fibronectin, gelatins of type I, III, IV, and V; weakly collagens III, IV, and V. Activates procollagenase. The protein is Stromelysin-2 (MMP10) of Homo sapiens (Human).